The sequence spans 191 residues: Ribosome maturation factor RimM (191 aa).

The 78-residue stretch at 114 to 191 folds into the PRC barrel domain; it reads EDEYYWVDLI…RIVVDWQPDY (78 aa).

The protein belongs to the RimM family. Binds ribosomal protein uS19.

It localises to the cytoplasm. In terms of biological role, an accessory protein needed during the final step in the assembly of 30S ribosomal subunit, possibly for assembly of the head region. Essential for efficient processing of 16S rRNA. May be needed both before and after RbfA during the maturation of 16S rRNA. It has affinity for free ribosomal 30S subunits but not for 70S ribosomes. This chain is Ribosome maturation factor RimM, found in Paracidovorax citrulli (strain AAC00-1) (Acidovorax citrulli).